The sequence spans 374 residues: N-acetyldiaminopimelate deacetylase (374 aa).

Asp69 is an active-site residue. Glu128 (proton acceptor) is an active-site residue.

It belongs to the peptidase M20A family. N-acetyldiaminopimelate deacetylase subfamily.

The enzyme catalyses N-acetyl-(2S,6S)-2,6-diaminopimelate + H2O = (2S,6S)-2,6-diaminopimelate + acetate. The protein operates within amino-acid biosynthesis; L-lysine biosynthesis via DAP pathway; LL-2,6-diaminopimelate from (S)-tetrahydrodipicolinate (acetylase route): step 3/3. Functionally, catalyzes the conversion of N-acetyl-diaminopimelate to diaminopimelate and acetate. The protein is N-acetyldiaminopimelate deacetylase (ykuR) of Bacillus subtilis (strain 168).